Consider the following 343-residue polypeptide: Galactoside alpha-(1,2)-fucosyltransferase 2 (343 aa).

The Cytoplasmic segment spans residues 1 to 14 (MLVVQMPFSFPMAH). Residues 15–28 (FILFVFTVSTIFHV) traverse the membrane as a helical; Signal-anchor for type II membrane protein segment. The Lumenal portion of the chain corresponds to 29–343 (QQRLAKIQAM…AADLSPLLKH (315 aa)). Residues Asn188, Asn282, and Asn308 are each glycosylated (N-linked (GlcNAc...) asparagine).

Belongs to the glycosyltransferase 11 family.

Its subcellular location is the golgi apparatus. It localises to the golgi stack membrane. It catalyses the reaction a beta-D-galactosyl-(1-&gt;3)-N-acetyl-beta-D-glucosaminyl derivative + GDP-beta-L-fucose = an alpha-L-Fuc-(1-&gt;2)-beta-D-Gal-(1-&gt;3)-beta-D-GlcNAc derivative + GDP + H(+). The catalysed reaction is a beta-D-galactosyl-(1-&gt;4)-N-acetyl-beta-D-glucosaminyl derivative + GDP-beta-L-fucose = an alpha-L-Fuc-(1-&gt;2)-beta-D-Gal-(1-&gt;4)-beta-D-GlcNAc derivative + GDP + H(+). It carries out the reaction a neolactoside nLc4Cer + GDP-beta-L-fucose = a neolactoside IV(2)-alpha-Fuc-nLc4Cer + GDP + H(+). The enzyme catalyses a neolactoside nLc4Cer(d18:1(4E)) + GDP-beta-L-fucose = a neolactoside IV(2)-alpha-Fuc-nLc4Cer(d18:1(4E)) + GDP + H(+). It catalyses the reaction a ganglioside GM1 + GDP-beta-L-fucose = a ganglioside Fuc-GM1 + GDP + H(+). The catalysed reaction is a ganglioside GA1 + GDP-beta-L-fucose = a ganglioside Fuc-GA1 + GDP + H(+). It carries out the reaction Lc4Cer + GDP-beta-L-fucose = alpha-L-fucosyl-(1-&gt;2)-beta-D-galactosyl-(1-&gt;3)-N-acetyl-beta-D-glucosaminyl-(1-&gt;3)-beta-D-galactosyl-(1-&gt;4)-beta-D-glucosyl-(1&lt;-&gt;1')-ceramide + GDP + H(+). The enzyme catalyses a beta-D-Gal-(1-&gt;3)-beta-D-GlcNAc-(1-&gt;3)-beta-D-Gal-(1-&gt;4)-beta-D-Glc-(1&lt;-&gt;1')-Cer(d18:1(4E)) + GDP-beta-L-fucose = alpha-L-fucosyl-(1-&gt;2)- beta-D-galactosyl-(1-&gt;3)-N-acetyl-beta-D-glucosaminyl-(1-&gt;3)-beta-D-galactosyl-(1-&gt;4)-beta-D-glucosyl-(1&lt;-&gt;1')-N-acylsphing-4-enine + GDP + H(+). It catalyses the reaction a ganglioside GD1b + GDP-beta-L-fucose = a ganglioside Fuc-GD1b + GDP + H(+). The catalysed reaction is a ganglioside GM1 (d18:1(4E)) + GDP-beta-L-fucose = a ganglioside Fuc-GM1 (d18:1(4E)) + GDP + H(+). It carries out the reaction a globoside GalGb4Cer (d18:1(4E)) + GDP-beta-L-fucose = a globoside Globo-H (d18:1(4E)) + GDP + H(+). The enzyme catalyses a lactoside III(4)-a-Fuc-Lc4Cer + GDP-beta-L-fucose = a lactoside IV(2),III(4)-a-[Fuc]2-Lc4Cer + GDP + H(+). It catalyses the reaction beta-D-galactosyl-(1-&gt;3)-N-acetyl-D-galactosamine + GDP-beta-L-fucose = alpha-L-fucosyl-(1-&gt;2)-beta-D-galactosyl-(1-&gt;3)-N-acetyl-D-galactosamine + GDP + H(+). It functions in the pathway protein modification; protein glycosylation. Catalyzes the transfer of L-fucose, from a guanosine diphosphate-beta-L-fucose, to the terminal galactose on both O- and N-linked glycans chains of cell surface glycoproteins and glycolipids and the resulting epitope regulates several processes such as cell-cell interaction including host-microbe interaction, cell surface expression and cell proliferation. Preferentially fucosylates gangliosides GA1 and GM1 in the antrum, cecum and colon and in the female reproductive organs. Fucosylated host glycoproteins or glycolipids mediate interaction with intestinal microbiota influencing its composition. Creates a soluble precursor oligosaccharide FuC-alpha ((1,2)Galbeta-) called the H antigen which is an essential substrate for the final step in the soluble ABO blood group antigen synthesis pathway. The polypeptide is Galactoside alpha-(1,2)-fucosyltransferase 2 (Hylobates lar (Lar gibbon)).